The chain runs to 164 residues: B-phycoerythrin alpha chain (164 aa).

(2R,3E)-phycoerythrobilin is bound by residues Cys82 and Cys139.

It belongs to the phycobiliprotein family. In terms of assembly, heteromer of 6 alpha, 6 beta and one gamma chain. Post-translationally, contains two covalently linked bilin chromophores.

It localises to the plastid. Its subcellular location is the chloroplast thylakoid membrane. In terms of biological role, light-harvesting photosynthetic bile pigment-protein from the phycobiliprotein complex. This chain is B-phycoerythrin alpha chain (cpeA), found in Porphyridium sordidum (Red alga).